Here is a 455-residue protein sequence, read N- to C-terminus: Ribosomal protein uS12 methylthiotransferase RimO (455 aa).

One can recognise an MTTase N-terminal domain in the interval 1 to 114 (MKYHIVTLGC…INALVGQLER (114 aa)). [4Fe-4S] cluster-binding residues include Cys-10, Cys-46, Cys-78, Cys-166, Cys-170, and Cys-173. A Radical SAM core domain is found at 152–383 (THQTPSAYLK…MRLQQTISYT (232 aa)). One can recognise a TRAM domain in the interval 386–455 (QRWVGRTIKV…AYDLWGEALS (70 aa)).

The protein belongs to the methylthiotransferase family. RimO subfamily. It depends on [4Fe-4S] cluster as a cofactor.

It localises to the cytoplasm. It catalyses the reaction L-aspartate(89)-[ribosomal protein uS12]-hydrogen + (sulfur carrier)-SH + AH2 + 2 S-adenosyl-L-methionine = 3-methylsulfanyl-L-aspartate(89)-[ribosomal protein uS12]-hydrogen + (sulfur carrier)-H + 5'-deoxyadenosine + L-methionine + A + S-adenosyl-L-homocysteine + 2 H(+). In terms of biological role, catalyzes the methylthiolation of an aspartic acid residue of ribosomal protein uS12. This chain is Ribosomal protein uS12 methylthiotransferase RimO, found in Chloroflexus aurantiacus (strain ATCC 29366 / DSM 635 / J-10-fl).